Here is a 467-residue protein sequence, read N- to C-terminus: Asparagine--tRNA ligase (467 aa).

Belongs to the class-II aminoacyl-tRNA synthetase family. As to quaternary structure, homodimer.

The protein localises to the cytoplasm. The catalysed reaction is tRNA(Asn) + L-asparagine + ATP = L-asparaginyl-tRNA(Asn) + AMP + diphosphate + H(+). In Phocaeicola vulgatus (strain ATCC 8482 / DSM 1447 / JCM 5826 / CCUG 4940 / NBRC 14291 / NCTC 11154) (Bacteroides vulgatus), this protein is Asparagine--tRNA ligase.